A 143-amino-acid polypeptide reads, in one-letter code: Transcriptional regulator MraZ (143 aa).

2 consecutive SpoVT-AbrB domains span residues 5 to 47 (EYQH…PQDE) and 76 to 119 (ATEC…SKER).

Belongs to the MraZ family. Forms oligomers.

It localises to the cytoplasm. It is found in the nucleoid. In Brevibacillus brevis (strain 47 / JCM 6285 / NBRC 100599), this protein is Transcriptional regulator MraZ.